Consider the following 637-residue polypeptide: GTPase-activating protein GYP1 (637 aa).

The span at 1-17 shows a compositional bias: basic and acidic residues; the sequence is MGVRSAAKEMHERDHNS. 2 disordered regions span residues 1–152 and 187–233; these read MGVR…GDRY and RTLS…NDSK. A compositionally biased stretch (polar residues) spans 18–27; the sequence is DSSSLVTSLM. Low complexity predominate over residues 28–45; it reads KSWRISSASSSKKPSLYK. The segment covering 46-59 has biased composition (polar residues); sequence MNTTESTSLPSGYA. Ser69 bears the Phosphoserine mark. Polar residues-rich tracts occupy residues 79-91 and 98-107; these read QQAS…NSYS and PTLSTASNES. Over residues 115 to 127 the composition is skewed to basic residues; it reads RQHHQRHHHHQQP. Low complexity-rich tracts occupy residues 128-142 and 187-207; these read RHSS…CSNS and RTLS…MGTS. Polar residues predominate over residues 208–223; sequence AVRNSSSSFTYPQLPQ. A Phosphoserine modification is found at Ser250. Residues 280–508 form the Rab-GAP TBC domain; that stretch reads GIPKIHRPVV…RMWDTYLSET (229 aa). The interval 543–564 is disordered; it reads DFQSPTTALSNMTPNNAVEDSG.

The protein resides in the golgi apparatus. The protein localises to the golgi stack. Functionally, GTPase-activating protein (GAP) that stimulates specifically the intrinsic GTPase activity of Ypt/Rab-type GTPases YPT1 and YPT7. Functions on the Golgi as a negative regulator of YPT1. Functions on the vacuole as a negative regulator of YPT7. It is also active on SEC4 and YPT51. Provides a catalytic arginine (arginine finger) and glutamine (glutamine finger) in trans to accelerate the GTP hydrolysis rate of the substrate GTPase. The polypeptide is GTPase-activating protein GYP1 (GYP1) (Saccharomyces cerevisiae (strain ATCC 204508 / S288c) (Baker's yeast)).